A 290-amino-acid polypeptide reads, in one-letter code: Poly-beta-1,6-N-acetyl-D-glucosamine N-deacetylase (290 aa).

The first 28 residues, 1–28 (MKYRKFIILVLSILIILPVSTLDGHHIA), serve as a signal peptide directing secretion. The 177-residue stretch at 114-290 (RSVWINFDDM…KRWDGFHEKD (177 aa)) folds into the NodB homology domain.

This sequence belongs to the polysaccharide deacetylase family.

It is found in the secreted. The protein localises to the cell wall. Functionally, catalyzes the N-deacetylation of poly-beta-1,6-N-acetyl-D-glucosamine (PNAG, also referred to as PIA), a biofilm adhesin polysaccharide. N-deacetylation is crucial for attachment of the polysaccharide to the bacterial cell surface; it leads to the introduction of positive charges in the otherwise neutral PIA polymer, allowing electrostatic interactions. In Staphylococcus aureus (strain NCTC 8325 / PS 47), this protein is Poly-beta-1,6-N-acetyl-D-glucosamine N-deacetylase (icaB).